Reading from the N-terminus, the 1255-residue chain is MRRGGWRKRAGEGDGWGGWGGYMSAKVKKLEDQFRSDSAIQHQRDGNSSSIFSGVAIYVNGFTDPSADELRRLMMLHGGQYHVYYSRSKTTHIIATNLPNAKIKELKGEKVVRPEWIVESIKAGRLLSHIPYQLYTKQSSVQKGLSFNSICKPEDAMPGPSNIAKDLNRVNHIKQCEMESEITPNGISSWNEEEEEDSDGLGFTKLDQILPERKQNGIQSHKDSTAIFNGHTHNTCISALKTQDCLVPSSNSVASRFSPGPVQEEGKPEKGIVDFRDCTMQQLQQSNKNTDFSWNPHRTMSNSSSSSSLHSNTKINGAHHSTVQGPSSTKSTSVPTPSKAASLSVSKPSDCSFISDFYSRSRLHHISTWKCELTEFVNSLQRKNSGVFPGREKLKKWKAGRSALKTDTGNVSVASSAKPQSCIMHVDMDCFFVSVAIRNRPDLKGKPVAVTSNRGAGKAPLRPGANPQLEWQYYQNKLLNGKAEIRIPDKLDSLVWEHSDSAHMNGVDCDLTVLSMAEIASCSYEARQAGIKNGMFFGQAKKLCPNLQAVSYDFNAYKEVAQTVYEILASYTHNIEAVSCDEALVDITEILTETRLTPDELANAIRDEIKAQTKCTASVGMGSNILLARMATRKAKPDGQYHLKPEEVDDFIRGQLVTNLPGVGRSMESKLASLGIRTCGDLQCASMSKLQKEFGPKTGQMLYRFCRGLDDRPVRTEKERKSVSAEINYGIRFTQPKEAEAFLLSLSEEIQRRLEAAGMKGKRLTLKIMVRKAGAPVEPAKYGGHGICDNIARTVTLDHATDSAKVIGKETLNMFHTMKLNISDMRGVGIQVQQLVPISKTTSAQSAVQSGRLPGGSHSVIDLLHVQKAKKCSEEEHKEVFVAAMDLEISSDSRTCTVLPSRGTHLTAGLNSNVSKTDSAVKLNGLHSPISVKSRLNLSIEVPSASQLDKSVLEALPPDLREQVEQIYTIQQGETYGDSKREPINGCNTALLSQPVGTVLLQVPELQEPNANMGINVIALPAFSQVDPEVFAALPAELQAELKDAYDQRQKQPEQQPANAFVSKNPCLQLKHATTKNKKKIRKKNPVSPVKKIQSPLKNKLLGSPAKNMPAASGSPQKLIDGFLKQEGAAAQLEAVPSTSDASDPSALQTEQCGSFRPQAPNLAGAVEFNDVKTLLKEWITTISDPMEEDILQVVKYCTDLIEEKDLEKLDLVVKYMKRLMQSSVESVWNMAFDFILDNVQVVLQQTYGSTLKVI.

The 88-residue stretch at 47-134 folds into the BRCT domain; the sequence is NSSSIFSGVA…RLLSHIPYQL (88 aa). Positions 287–300 are enriched in polar residues; the sequence is NKNTDFSWNPHRTM. The disordered stretch occupies residues 287–348; it reads NKNTDFSWNP…KAASLSVSKP (62 aa). Residues 301 to 312 show a composition bias toward low complexity; the sequence is SNSSSSSSLHSN. Residues 313-325 are compositionally biased toward polar residues; that stretch reads TKINGAHHSTVQG. Residues 326–339 are compositionally biased toward low complexity; that stretch reads PSSTKSTSVPTPSK. An interaction with target DNA region spans residues 357 to 367; sequence FYSRSRLHHIS. DCTP-binding positions include Arg362, 427 to 431, 521 to 527, Asn533, and Asp581; these read DMDCF and SCSYEAR. The UmuC domain maps to 423–664; that stretch reads IMHVDMDCFF…QLVTNLPGVG (242 aa). Asp427 serves as a coordination point for Mg(2+). 2 residues coordinate Mg(2+): Asp581 and Glu582. Interaction with target DNA stretches follow at residues 664–667 and 720–728; these read GRSM and RKSVSAEIN. Positions 1073-1085 are enriched in basic residues; the sequence is ATTKNKKKIRKKN. 2 disordered regions span residues 1073-1114 and 1134-1153; these read ATTK…AASG and EAVPSTSDASDPSALQTEQC. The Nuclear localization signal motif lies at 1079–1085; the sequence is KKIRKKN. Residues 1137–1153 show a composition bias toward polar residues; sequence PSTSDASDPSALQTEQC. A protein interaction domain region spans residues 1156–1255; that stretch reads FRPQAPNLAG…QTYGSTLKVI (100 aa).

It belongs to the DNA polymerase type-Y family. Monomer.

It is found in the nucleus. In terms of biological role, deoxycytidyl transferase involved in DNA repair. Transfers a dCMP residue from dCTP to the 3'-end of a DNA primer in a template-dependent reaction. May assist in the first step in the bypass of abasic lesions by the insertion of a nucleotide opposite the lesion. Required for normal induction of mutations by physical and chemical agents. May play a role in homologous recombination and immunoglobulin gene conversion. This chain is DNA repair protein REV1 (REV1), found in Gallus gallus (Chicken).